Consider the following 233-residue polypeptide: Probable GTP-binding protein EngB (233 aa).

The EngB-type G domain maps to 23-209; that stretch reads AVPEVAFAGR…QRIVAGWLCL (187 aa). Residues 31-38, 58-62, 82-85, 149-152, and 188-190 contribute to the GTP site; these read GRSNAGKS, GRTQH, DLPG, TKAD, and FSS. 2 residues coordinate Mg(2+): Ser38 and Thr60.

It belongs to the TRAFAC class TrmE-Era-EngA-EngB-Septin-like GTPase superfamily. EngB GTPase family. Requires Mg(2+) as cofactor.

Functionally, necessary for normal cell division and for the maintenance of normal septation. The chain is Probable GTP-binding protein EngB from Ralstonia pickettii (strain 12J).